Reading from the N-terminus, the 350-residue chain is MKKTVAVLFGGESKEHEISLQSSISIINAIDKKKYNIILIGVEKNGKIGIRSINNYILFKYNINYIKLAPAVSYLYIIPGKNNYQFYSLKNKKMLKIDVIFSILHGSNGENGAFQGLFNTIYTPFVGSNVLSSSICMDKDISKRILSTFGISVVPSITLYYENYKKKINKIINNIKFPCCIKPSNQGSSFGVNVANDFISLKESIDVAFLYSKKILIEPFIQGREIEVGVLGNRNVISSVCGEIKFKKIFYDYKEKYISKKTKIIIPAKISNEISNKIKKIAKLAFISLECSIMARVDFFLTKNKKIFLNEINTIPGFTKNSIYPKLWSKSGLDFKSLINKLILLTIYKK.

In terms of domain architecture, ATP-grasp spans 143–344 (KRILSTFGIS…FKSLINKLIL (202 aa)). 172 to 227 (INNIKFPCCIKPSNQGSSFGVNVANDFISLKESIDVAFLYSKKILIEPFIQGREIE) is a binding site for ATP. Mg(2+) contacts are provided by D298, E311, and N313.

The protein belongs to the D-alanine--D-alanine ligase family. Requires Mg(2+) as cofactor. Mn(2+) is required as a cofactor.

The protein localises to the cytoplasm. It carries out the reaction 2 D-alanine + ATP = D-alanyl-D-alanine + ADP + phosphate + H(+). It functions in the pathway cell wall biogenesis; peptidoglycan biosynthesis. Cell wall formation. This is D-alanine--D-alanine ligase from Wigglesworthia glossinidia brevipalpis.